The sequence spans 197 residues: Inner membrane protein RclC (197 aa).

At 1–15 (MEKYLHLLSRGDKIG) the chain is on the periplasmic side. The chain crosses the membrane as a helical span at residues 16-36 (LTLIRLSIAIVFMWIGLLKFV). Residues 37–85 (PYEADSITPFVANSPLMSFFYEHPEDYKQYLTHEGEYKPEARAWQTANN) are Cytoplasmic-facing. Residues 86 to 106 (TYGFSNGLGVVEVIIALLVLA) form a helical membrane-spanning segment. Residues 107–112 (NPVNRW) lie on the Periplasmic side of the membrane. A helical membrane pass occupies residues 113–133 (LGLLGGLMAFTTPLVTLSFLI). The Cytoplasmic segment spans residues 134 to 197 (TTPEAWVPAL…ESSSTLKTEY (64 aa)).

It is found in the cell inner membrane. In terms of biological role, probably involved in reactive chlorine species (RCS) stress resistance. In Escherichia coli (strain K12), this protein is Inner membrane protein RclC (rclC).